Consider the following 255-residue polypeptide: Ornithine decarboxylase antizyme (255 aa).

The protein belongs to the ODC antizyme family. As to quaternary structure, interacts with ODC and thereby sterically blocks ODC homodimerization.

Its function is as follows. Ornithine decarboxylase (ODC) antizyme protein that negatively regulates ODC activity and intracellular polyamine biosynthesis in response to increased intracellular polyamine levels. Binds to ODC monomers, inhibiting the assembly of the functional ODC homodimer, and targets the monomers for ubiquitin-independent proteolytic destruction by the 26S proteasome. The chain is Ornithine decarboxylase antizyme (OAZ1) from Eremothecium gossypii (strain ATCC 10895 / CBS 109.51 / FGSC 9923 / NRRL Y-1056) (Yeast).